A 443-amino-acid chain; its full sequence is Elongation factor 1-alpha (443 aa).

Residues K5–Y228 form the tr-type G domain. The interval G14–S21 is G1. G14 to S21 contacts GTP. The G2 stretch occupies residues G70–D74. Residues D91–G94 form a G3 region. GTP contacts are provided by residues D91–H95 and N153–D156. Positions N153–D156 are G4. Positions S192–F194 are G5.

Belongs to the TRAFAC class translation factor GTPase superfamily. Classic translation factor GTPase family. EF-Tu/EF-1A subfamily.

The protein resides in the cytoplasm. In terms of biological role, this protein promotes the GTP-dependent binding of aminoacyl-tRNA to the A-site of ribosomes during protein biosynthesis. This is Elongation factor 1-alpha (MEF-1) from Plasmodium falciparum (isolate K1 / Thailand).